A 278-amino-acid chain; its full sequence is Membrane protein insertase YidC 2 (278 aa).

The N-terminal stretch at 1 to 18 is a signal peptide; the sequence is MHKRLFITLLGFIILLAG. A lipid anchor (N-palmitoyl cysteine) is attached at Cys-19. Cys-19 carries the S-diacylglycerol cysteine lipid modification. Helical transmembrane passes span 55–75, 132–152, 176–196, and 224–244; these read GFAI…FMLI, MLGC…YMSL, LIMT…NSIH, and AAAL…QMHF.

It belongs to the OXA1/ALB3/YidC family. Type 2 subfamily.

It is found in the cell membrane. Its function is as follows. Required for the insertion and/or proper folding and/or complex formation of integral membrane proteins into the membrane. Involved in integration of membrane proteins that insert both dependently and independently of the Sec translocase complex, as well as at least some lipoproteins. The sequence is that of Membrane protein insertase YidC 2 from Staphylococcus epidermidis (strain ATCC 12228 / FDA PCI 1200).